A 450-amino-acid polypeptide reads, in one-letter code: MLTCNECTTWEQFLNYVKTRCSKTAFENWISPIQVLEETQEKIRLEVPNIFVQNYLLDNYKRDLCSFVPLDVHGEPALEFVVAEHKKPSAPVASQKESNEGISEVFEETKDFELKLNLSYRFDNFIEGPSNQFVKSAAVGIAGKPGRSYNPLFIHGGVGLGKTHLLHAVGHYVREHHKNLRIHCITTEAFINDLVYHLKSKSVDKMKNFYRSLDLLLVDDIQFLQNRQNFEEEFCNTFETLINLSKQIVITSDKPPSQLKLSERIIARMEWGLVAHVGIPDLETRVAILQHKAEQKGLLIPNEMAFYIADHIYGNVRQLEGAINKLTAYCRLFGKSLTETTVRETLKELFRSPTKQKISVETILKSVATVFQVKLNDLKGNSRSKDLVLARQIAMYLAKTLITDSLVAIGAAFGKTHSTVLYACKTIEHKLQNDETLKRQVNLCKNHIVG.

The tract at residues 1–87 is domain I, interacts with DnaA modulators; that stretch reads MLTCNECTTW…LEFVVAEHKK (87 aa). The interval 87 to 114 is domain II; it reads KPSAPVASQKESNEGISEVFEETKDFEL. Residues 115–330 are domain III, AAA+ region; that stretch reads KLNLSYRFDN…GAINKLTAYC (216 aa). 4 residues coordinate ATP: glycine 159, glycine 161, lysine 162, and threonine 163. Positions 331 to 450 are domain IV, binds dsDNA; it reads RLFGKSLTET…VNLCKNHIVG (120 aa).

This sequence belongs to the DnaA family. In terms of assembly, oligomerizes as a right-handed, spiral filament on DNA at oriC.

It localises to the cytoplasm. Plays an essential role in the initiation and regulation of chromosomal replication. ATP-DnaA binds to the origin of replication (oriC) to initiate formation of the DNA replication initiation complex once per cell cycle. Binds the DnaA box (a 9 base pair repeat at the origin) and separates the double-stranded (ds)DNA. Forms a right-handed helical filament on oriC DNA; dsDNA binds to the exterior of the filament while single-stranded (ss)DNA is stabiized in the filament's interior. The ATP-DnaA-oriC complex binds and stabilizes one strand of the AT-rich DNA unwinding element (DUE), permitting loading of DNA polymerase. After initiation quickly degrades to an ADP-DnaA complex that is not apt for DNA replication. Binds acidic phospholipids. In Chlamydia pneumoniae (Chlamydophila pneumoniae), this protein is Chromosomal replication initiator protein DnaA 2.